The sequence spans 295 residues: Nucleotide-binding protein YvcJ (295 aa).

16–23 (GMSGAGKT) serves as a coordination point for ATP. A GTP-binding site is contributed by 67-70 (DLRG).

This sequence belongs to the RapZ-like family.

In terms of biological role, displays ATPase and GTPase activities. Can also hydrolyze pNPP. May affect the expression of competence via the phosphorylation of a cellular component. In Bacillus subtilis (strain 168), this protein is Nucleotide-binding protein YvcJ (yvcJ).